We begin with the raw amino-acid sequence, 624 residues long: ATP-dependent RNA helicase MRH4, mitochondrial (624 aa).

The N-terminal 43 residues, 1-43 (MSPVASTCLLCEMRTVVWGWQPAVPQPWHFVRFASSARLARRK), are a transit peptide targeting the mitochondrion. The disordered stretch occupies residues 41-120 (RRKPARMALS…KDAADKKQDG (80 aa)). Residues 86–119 (RLPDRPIPRSDAELKRSSSDLNNKEKDAADKKQD) are compositionally biased toward basic and acidic residues. Residues 151-184 (TSFDQFPLLPQVREAVYANAFPTLTEISPTPIQR) carry the Q motif motif. Residues 212–427 (EEELFHFDQF…EKKFPEMKRL (216 aa)) form the Helicase ATP-binding domain. 225–232 (AETGTGKT) is a binding site for ATP. A DEAD box motif is present at residues 374–377 (DEAD). The Helicase C-terminal domain maps to 438-624 (RVQLGVVDVD…EAMFRGQALI (187 aa)).

The protein belongs to the DEAD box helicase family. MRH4 subfamily.

It localises to the mitochondrion. It carries out the reaction ATP + H2O = ADP + phosphate + H(+). Functionally, ATP-binding RNA helicase involved in mitochondrial RNA metabolism. Required for maintenance of mitochondrial DNA. The protein is ATP-dependent RNA helicase MRH4, mitochondrial (MRH4) of Ajellomyces capsulatus (strain NAm1 / WU24) (Darling's disease fungus).